A 130-amino-acid chain; its full sequence is Large ribosomal subunit protein bL17 (130 aa).

It belongs to the bacterial ribosomal protein bL17 family. As to quaternary structure, part of the 50S ribosomal subunit. Contacts protein L32.

This chain is Large ribosomal subunit protein bL17, found in Nitrosomonas eutropha (strain DSM 101675 / C91 / Nm57).